The sequence spans 375 residues: Thioredoxin reductase 1, mitochondrial (375 aa).

Residues 1-37 (MNCVSRLKCLISKARSFARLGGESTLSQPPSLASAAF) constitute a mitochondrion transit peptide. FAD-binding positions include 58–61 (SGPA), 79–80 (FE), 87–92 (IAPGGQ), Asn101, Val134, Cys192, Asp337, and 344–346 (RQA). A disulfide bridge links Cys189 with Cys192.

This sequence belongs to the class-II pyridine nucleotide-disulfide oxidoreductase family. In terms of assembly, homodimer. The cofactor is FAD. Ubiquitous.

Its subcellular location is the cytoplasm. The protein resides in the mitochondrion. The enzyme catalyses [thioredoxin]-dithiol + NADP(+) = [thioredoxin]-disulfide + NADPH + H(+). Functionally, NADPH-dependent thioredoxin-disulfide reductase that reduces thioredoxins O1, O2 and F3. This Arabidopsis thaliana (Mouse-ear cress) protein is Thioredoxin reductase 1, mitochondrial (NTR1).